A 435-amino-acid polypeptide reads, in one-letter code: Serine--tRNA ligase (435 aa).

L-serine is bound at residue 237–239 (TAE). 268-270 (RSE) contacts ATP. E291 is a binding site for L-serine. 355-358 (EISS) contacts ATP. S390 contributes to the L-serine binding site.

Belongs to the class-II aminoacyl-tRNA synthetase family. Type-1 seryl-tRNA synthetase subfamily. As to quaternary structure, homodimer. The tRNA molecule binds across the dimer.

It localises to the cytoplasm. The catalysed reaction is tRNA(Ser) + L-serine + ATP = L-seryl-tRNA(Ser) + AMP + diphosphate + H(+). It catalyses the reaction tRNA(Sec) + L-serine + ATP = L-seryl-tRNA(Sec) + AMP + diphosphate + H(+). The protein operates within aminoacyl-tRNA biosynthesis; selenocysteinyl-tRNA(Sec) biosynthesis; L-seryl-tRNA(Sec) from L-serine and tRNA(Sec): step 1/1. Functionally, catalyzes the attachment of serine to tRNA(Ser). Is also able to aminoacylate tRNA(Sec) with serine, to form the misacylated tRNA L-seryl-tRNA(Sec), which will be further converted into selenocysteinyl-tRNA(Sec). This Lactobacillus acidophilus (strain ATCC 700396 / NCK56 / N2 / NCFM) protein is Serine--tRNA ligase.